Reading from the N-terminus, the 342-residue chain is Putative glycosyltransferases (342 aa).

The next 2 membrane-spanning stretches (helical) occupy residues 227–247 (IFYL…YLII) and 262–282 (VIVS…LVGI).

It belongs to the glycosyltransferase 2 family.

It localises to the cell membrane. Its function is as follows. May play only a redundant role in maintaining cell wall viability and bacterial virulence. In Mycobacterium tuberculosis (strain CDC 1551 / Oshkosh), this protein is Putative glycosyltransferases (pimF).